The following is an 83-amino-acid chain: Small ribosomal subunit protein uS17 (83 aa).

Belongs to the universal ribosomal protein uS17 family. In terms of assembly, part of the 30S ribosomal subunit.

Functionally, one of the primary rRNA binding proteins, it binds specifically to the 5'-end of 16S ribosomal RNA. This is Small ribosomal subunit protein uS17 from Campylobacter jejuni subsp. jejuni serotype O:6 (strain 81116 / NCTC 11828).